Here is a 332-residue protein sequence, read N- to C-terminus: uncharacterized protein (332 aa).

Residues Glu-306–Phe-332 form a disordered region.

This is an uncharacterized protein from Homo sapiens (Human).